The sequence spans 584 residues: Delta 8-(E)-sphingolipid desaturase (584 aa).

Residues 7–82 form the Cytochrome b5 heme-binding domain; that stretch reads KKIFTRSQII…FTRFKIGEIE (76 aa). Heme contacts are provided by His-42 and His-65. The interval 109-134 is disordered; sequence NKNTSNKKTLDSKLDNDSSNSTSDLE. Residues 261–281 traverse the membrane as a helical segment; sequence LFLYSLSFLKINQLFLSAVFM. Positions 293–297 match the Histidine box-1 motif; that stretch reads HDAGH. The chain crosses the membrane as a helical span at residues 306-326; that stretch reads IDNIFGMLIADWFGGLSLGWW. Residues 330–334 carry the Histidine box-2 motif; that stretch reads HNVHH. 3 helical membrane passes run 386–403, 423–443, and 455–475; these read YLYY…YRLS, YFEF…LVFK, and VMVS…SHFA. Positions 514-518 match the Histidine box-3 motif; it reads QAIHH.

This sequence belongs to the fatty acid desaturase type 1 family.

It localises to the membrane. The enzyme catalyses an N-acylsphing-4-enine + 2 Fe(II)-[cytochrome b5] + O2 + 2 H(+) = a (4E,8E)-4-sphinga-4,8-dienine ceramide + 2 Fe(III)-[cytochrome b5] + 2 H2O. It participates in lipid metabolism; sphingolipid metabolism. Functionally, delta(8)-fatty-acid desaturase which introduces a double bond at the 8-position in the long-chain base (LCB) of ceramides. Required for the formation of the di-unsaturated sphingoid base (E,E)-sphinga-4,8-dienine during glucosylceramide (GluCer) biosynthesis. The chain is Delta 8-(E)-sphingolipid desaturase from Candida albicans (strain SC5314 / ATCC MYA-2876) (Yeast).